Reading from the N-terminus, the 81-residue chain is Short neurotoxin 2 (81 aa).

Positions 1–21 (MKTLLLTLVVVTIVCLDLGYT) are cleaved as a signal peptide. 4 disulfide bridges follow: Cys-24–Cys-43, Cys-38–Cys-60, Cys-62–Cys-73, and Cys-74–Cys-79.

This sequence belongs to the three-finger toxin family. Short-chain subfamily. Type I alpha-neurotoxin sub-subfamily. Expressed by the venom gland.

Its subcellular location is the secreted. Its function is as follows. Binds to muscle nicotinic acetylcholine receptor (nAChR) and inhibit acetylcholine from binding to the receptor, thereby impairing neuromuscular transmission. In Hydrophis hardwickii (Hardwick's spine-bellied seasnake), this protein is Short neurotoxin 2.